A 204-amino-acid polypeptide reads, in one-letter code: N-(5'-phosphoribosyl)anthranilate isomerase (204 aa).

This sequence belongs to the TrpF family.

The catalysed reaction is N-(5-phospho-beta-D-ribosyl)anthranilate = 1-(2-carboxyphenylamino)-1-deoxy-D-ribulose 5-phosphate. Its pathway is amino-acid biosynthesis; L-tryptophan biosynthesis; L-tryptophan from chorismate: step 3/5. The protein is N-(5'-phosphoribosyl)anthranilate isomerase of Bacillus cereus (strain AH187).